A 480-amino-acid polypeptide reads, in one-letter code: MRALPLSIGTIHFVGIGGIGMSGIAEVLHMLGYAVQGSDIAENANVQRLRAAGITVAIGHDAANLGAAQVVVTSTAVRRDNPEVVAARARLIPVVRRAEMLAELMRLRWAVAVGGTHGKTTTTSLIAAVLEAARLDPTVINGGIIEAYGTNTRMGSGDWMVVEADESDGSFLRLPSVITVVTNMDPEHLDHWGTAEAMQAAYDQFVSNIPFYGFAVLCIDHPAVQQMIPRLSDHRIVTYGFSPQADIRAEKVITDKLGATFEVVVTNRNRNRTRRAGPFRLPMLGHHNVQNALAAIAVGVEMDIDDATLRSAFAGFRGVKRRFTRTGETGGITVIDDYGHHPVEIAAVLKAARQAGARDVIAVVQPHRYSRLQTLFGEFCTCMNDAGTVIVADVYAAGEAPIPGVDRDALVEGLRERGHRSVVPLPDPEHLAEMVHAIARPGDFVVCLGAGSITNWAQALPGQLAALQNPAAARKGECAA.

ATP is bound at residue 115 to 121 (GTHGKTT).

The protein belongs to the MurCDEF family.

It is found in the cytoplasm. It catalyses the reaction UDP-N-acetyl-alpha-D-muramate + L-alanine + ATP = UDP-N-acetyl-alpha-D-muramoyl-L-alanine + ADP + phosphate + H(+). Its pathway is cell wall biogenesis; peptidoglycan biosynthesis. Functionally, cell wall formation. The polypeptide is UDP-N-acetylmuramate--L-alanine ligase (Gluconacetobacter diazotrophicus (strain ATCC 49037 / DSM 5601 / CCUG 37298 / CIP 103539 / LMG 7603 / PAl5)).